Reading from the N-terminus, the 463-residue chain is A-type ATP synthase subunit B (463 aa).

This sequence belongs to the ATPase alpha/beta chains family. Has multiple subunits with at least A(3), B(3), C, D, E, F, H, I and proteolipid K(x).

The protein localises to the cell membrane. Its function is as follows. Component of the A-type ATP synthase that produces ATP from ADP in the presence of a proton gradient across the membrane. The B chain is a regulatory subunit. This Saccharolobus islandicus (strain Y.N.15.51 / Yellowstone #2) (Sulfolobus islandicus) protein is A-type ATP synthase subunit B.